Reading from the N-terminus, the 129-residue chain is Small ribosomal subunit protein uS11 (129 aa).

This sequence belongs to the universal ribosomal protein uS11 family. In terms of assembly, part of the 30S ribosomal subunit. Interacts with proteins S7 and S18. Binds to IF-3.

In terms of biological role, located on the platform of the 30S subunit, it bridges several disparate RNA helices of the 16S rRNA. Forms part of the Shine-Dalgarno cleft in the 70S ribosome. This is Small ribosomal subunit protein uS11 from Methylobacillus flagellatus (strain ATCC 51484 / DSM 6875 / VKM B-1610 / KT).